The sequence spans 340 residues: UPF0324 membrane protein BA_5405/GBAA_5405/BAS5024 (340 aa).

10 helical membrane-spanning segments follow: residues 13–35 (FGFS…LAEL), 40–59 (IMGQ…AAIG), 99–118 (VLVI…YGLT), 128–150 (GILT…APQV), 157–179 (TAVG…TLLY), 189–211 (YGVF…APGG), 218–240 (AVIV…GVWF), 255–277 (LPIP…GIIP), 279–301 (VVAG…GLGL), and 316–338 (FVAG…YALG).

This sequence belongs to the UPF0324 family.

The protein localises to the cell membrane. This is UPF0324 membrane protein BA_5405/GBAA_5405/BAS5024 from Bacillus anthracis.